Here is a 98-residue protein sequence, read N- to C-terminus: MKLTSHDIIRKPIITEKSMASMAEKRYTFIVHVDANKSQIKRAVEEVFNVKVESVNTINGLGKTKRMGVHVGKRSDYKKAIVTLTEESNGIEFFEGMQ.

Belongs to the universal ribosomal protein uL23 family. Part of the 50S ribosomal subunit. Contacts protein L29, and trigger factor when it is bound to the ribosome.

One of the early assembly proteins it binds 23S rRNA. One of the proteins that surrounds the polypeptide exit tunnel on the outside of the ribosome. Forms the main docking site for trigger factor binding to the ribosome. The protein is Large ribosomal subunit protein uL23 of Clostridium beijerinckii (strain ATCC 51743 / NCIMB 8052) (Clostridium acetobutylicum).